The chain runs to 417 residues: Serine hydroxymethyltransferase (417 aa).

(6S)-5,6,7,8-tetrahydrofolate contacts are provided by residues Leu-117 and 121–123; that span reads GHL. An N6-(pyridoxal phosphate)lysine modification is found at Lys-226.

The protein belongs to the SHMT family. As to quaternary structure, homodimer. Pyridoxal 5'-phosphate is required as a cofactor.

The protein resides in the cytoplasm. The enzyme catalyses (6R)-5,10-methylene-5,6,7,8-tetrahydrofolate + glycine + H2O = (6S)-5,6,7,8-tetrahydrofolate + L-serine. The protein operates within one-carbon metabolism; tetrahydrofolate interconversion. Its pathway is amino-acid biosynthesis; glycine biosynthesis; glycine from L-serine: step 1/1. Functionally, catalyzes the reversible interconversion of serine and glycine with tetrahydrofolate (THF) serving as the one-carbon carrier. This reaction serves as the major source of one-carbon groups required for the biosynthesis of purines, thymidylate, methionine, and other important biomolecules. Also exhibits THF-independent aldolase activity toward beta-hydroxyamino acids, producing glycine and aldehydes, via a retro-aldol mechanism. The chain is Serine hydroxymethyltransferase from Shouchella clausii (strain KSM-K16) (Alkalihalobacillus clausii).